The primary structure comprises 51 residues: Large ribosomal subunit protein bL33 (51 aa).

It belongs to the bacterial ribosomal protein bL33 family.

This chain is Large ribosomal subunit protein bL33, found in Acinetobacter baylyi (strain ATCC 33305 / BD413 / ADP1).